The primary structure comprises 308 residues: Aspartate carbamoyltransferase catalytic subunit (308 aa).

Positions 58 and 59 each coordinate carbamoyl phosphate. Lys86 lines the L-aspartate pocket. Positions 108, 136, and 139 each coordinate carbamoyl phosphate. Residues Arg169 and Arg227 each contribute to the L-aspartate site. Residues Gly268 and Pro269 each coordinate carbamoyl phosphate.

It belongs to the aspartate/ornithine carbamoyltransferase superfamily. ATCase family. In terms of assembly, heterododecamer (2C3:3R2) of six catalytic PyrB chains organized as two trimers (C3), and six regulatory PyrI chains organized as three dimers (R2).

The enzyme catalyses carbamoyl phosphate + L-aspartate = N-carbamoyl-L-aspartate + phosphate + H(+). The protein operates within pyrimidine metabolism; UMP biosynthesis via de novo pathway; (S)-dihydroorotate from bicarbonate: step 2/3. In terms of biological role, catalyzes the condensation of carbamoyl phosphate and aspartate to form carbamoyl aspartate and inorganic phosphate, the committed step in the de novo pyrimidine nucleotide biosynthesis pathway. This Chloroflexus aggregans (strain MD-66 / DSM 9485) protein is Aspartate carbamoyltransferase catalytic subunit.